The primary structure comprises 67 residues: Conotoxin Cl6.7 (67 aa).

An N-terminal signal peptide occupies residues 1–24 (MKVTAVLMVAVLVLTACQLTTANT). The propeptide occupies 25–39 (TDYVRRIPARKSTMS). Disulfide bonds link Cys-43/Cys-58, Cys-50/Cys-62, and Cys-57/Cys-66.

The protein belongs to the conotoxin O1 superfamily. Expressed by the venom duct.

It localises to the secreted. The polypeptide is Conotoxin Cl6.7 (Californiconus californicus (California cone)).